Reading from the N-terminus, the 182-residue chain is Heat shock protein beta-2 (182 aa).

Positions proline 55–serine 163 constitute a sHSP domain.

This sequence belongs to the small heat shock protein (HSP20) family. As to quaternary structure, interacts with DMPK; may enhance its kinase activity. In terms of tissue distribution, expressed preferentially in skeletal muscle and heart but not in the lens.

Its subcellular location is the cytoplasm. The protein resides in the nucleus. Its function is as follows. May regulate the kinase DMPK. This chain is Heat shock protein beta-2 (HSPB2), found in Homo sapiens (Human).